Reading from the N-terminus, the 263-residue chain is uncharacterized protein (263 aa).

Residues 1–22 (MGYLKRLVLYIVIMVMSVFIIG) form the signal peptide. A lipid anchor (N-palmitoyl cysteine) is attached at cysteine 23. Residue cysteine 23 is the site of S-diacylglycerol cysteine attachment.

It belongs to the staphylococcal tandem lipoprotein family.

Its subcellular location is the cell membrane. This is an uncharacterized protein from Staphylococcus aureus (strain N315).